A 251-amino-acid polypeptide reads, in one-letter code: PF03932 family protein CutC (251 aa).

Belongs to the CutC family.

The protein resides in the cytoplasm. This is PF03932 family protein CutC from Bacteroides fragilis (strain ATCC 25285 / DSM 2151 / CCUG 4856 / JCM 11019 / LMG 10263 / NCTC 9343 / Onslow / VPI 2553 / EN-2).